Here is a 430-residue protein sequence, read N- to C-terminus: Adenylosuccinate synthetase (430 aa).

GTP is bound by residues 11-17 and 39-41; these read GDEGKGK and GHS. D12 functions as the Proton acceptor in the catalytic mechanism. Mg(2+) is bound by residues D12 and G39. Residues 12-15, 37-40, T129, R143, N221, T236, and R300 each bind IMP; these read DEGK and NAGH. Catalysis depends on H40, which acts as the Proton donor. Position 296 to 302 (296 to 302) interacts with substrate; it reads VSTGRKR. GTP is bound by residues R302, 328 to 330, and 412 to 414; these read KLD and GTG.

Belongs to the adenylosuccinate synthetase family. Homodimer. The cofactor is Mg(2+).

The protein resides in the cytoplasm. It catalyses the reaction IMP + L-aspartate + GTP = N(6)-(1,2-dicarboxyethyl)-AMP + GDP + phosphate + 2 H(+). It functions in the pathway purine metabolism; AMP biosynthesis via de novo pathway; AMP from IMP: step 1/2. Its function is as follows. Plays an important role in the de novo pathway and in the salvage pathway of purine nucleotide biosynthesis. Catalyzes the first committed step in the biosynthesis of AMP from IMP. The chain is Adenylosuccinate synthetase from Sordaria macrospora (strain ATCC MYA-333 / DSM 997 / K(L3346) / K-hell).